Here is a 179-residue protein sequence, read N- to C-terminus: Signal peptidase complex catalytic subunit SEC11A (179 aa).

Topologically, residues 1–16 (MLSLDFLDDVRRMNKR) are cytoplasmic. The chain crosses the membrane as a helical; Signal-anchor for type II membrane protein span at residues 17–36 (QLYYQVLNFGMIVSSALMIW). Over 37 to 179 (KGLMLITGSE…LGLFVLVHRE (143 aa)) the chain is Lumenal. Residues S56, H96, and D122 each act as charge relay system in the active site. Residues 165-176 (AVLFLLGLFVLV) form a C-terminal short (CTS) helix region.

Belongs to the peptidase S26B family. In terms of assembly, component of the signal peptidase complex paralog A (SPC-A) composed of a catalytic subunit SEC11A and three accessory subunits SPCS1, SPCS2 and SPCS3. Within the complex, interacts with SPCS2 and SPCS3. The complex induces a local thinning of the ER membrane which is used to measure the length of the signal peptide (SP) h-region of protein substrates. This ensures the selectivity of the complex towards h-regions shorter than 18-20 amino acids.

The protein resides in the endoplasmic reticulum membrane. The enzyme catalyses Cleavage of hydrophobic, N-terminal signal or leader sequences from secreted and periplasmic proteins.. In terms of biological role, catalytic component of the signal peptidase complex (SPC) which catalyzes the cleavage of N-terminal signal sequences from nascent proteins as they are translocated into the lumen of the endoplasmic reticulum. Specifically cleaves N-terminal signal peptides that contain a hydrophobic alpha-helix (h-region) shorter than 18-20 amino acids. The sequence is that of Signal peptidase complex catalytic subunit SEC11A (Sec11a) from Rattus norvegicus (Rat).